A 198-amino-acid polypeptide reads, in one-letter code: ATP-dependent Clp protease proteolytic subunit (198 aa).

The Nucleophile role is filled by Ser-98. His-123 is an active-site residue.

This sequence belongs to the peptidase S14 family. In terms of assembly, fourteen ClpP subunits assemble into 2 heptameric rings which stack back to back to give a disk-like structure with a central cavity, resembling the structure of eukaryotic proteasomes.

It localises to the cytoplasm. The catalysed reaction is Hydrolysis of proteins to small peptides in the presence of ATP and magnesium. alpha-casein is the usual test substrate. In the absence of ATP, only oligopeptides shorter than five residues are hydrolyzed (such as succinyl-Leu-Tyr-|-NHMec, and Leu-Tyr-Leu-|-Tyr-Trp, in which cleavage of the -Tyr-|-Leu- and -Tyr-|-Trp bonds also occurs).. Its function is as follows. Cleaves peptides in various proteins in a process that requires ATP hydrolysis. Has a chymotrypsin-like activity. Plays a major role in the degradation of misfolded proteins. The sequence is that of ATP-dependent Clp protease proteolytic subunit from Listeria monocytogenes serovar 1/2a (strain ATCC BAA-679 / EGD-e).